We begin with the raw amino-acid sequence, 429 residues long: Adenylosuccinate synthetase (429 aa).

Residues 12–18 and 40–42 contribute to the GTP site; these read GDEGKGK and GHT. The Proton acceptor role is filled by aspartate 13. Mg(2+) contacts are provided by aspartate 13 and glycine 40. Residues 13–16, 38–41, threonine 128, arginine 142, glutamine 223, threonine 238, and arginine 302 each bind IMP; these read DEGK and NAGH. The Proton donor role is filled by histidine 41. 298–304 lines the substrate pocket; the sequence is VNTGRKR. Residues arginine 304, 330 to 332, and 412 to 414 each bind GTP; these read KLD and GVG.

This sequence belongs to the adenylosuccinate synthetase family. As to quaternary structure, homodimer. Mg(2+) serves as cofactor.

The protein resides in the cytoplasm. It carries out the reaction IMP + L-aspartate + GTP = N(6)-(1,2-dicarboxyethyl)-AMP + GDP + phosphate + 2 H(+). It functions in the pathway purine metabolism; AMP biosynthesis via de novo pathway; AMP from IMP: step 1/2. Plays an important role in the de novo pathway of purine nucleotide biosynthesis. Catalyzes the first committed step in the biosynthesis of AMP from IMP. The chain is Adenylosuccinate synthetase from Corynebacterium diphtheriae (strain ATCC 700971 / NCTC 13129 / Biotype gravis).